Consider the following 118-residue polypeptide: MSSKNKIIQELEAEQLKQDVPEFSPGDTVVVQVKVKEGNRERLQAFEGVVIARRNRGLDSAFTVRKISHGIGVERTFQTHSKQVDSVAVKRRGDVRQAKLYYLRELTGRAARIKEKLG.

It belongs to the bacterial ribosomal protein bL19 family.

In terms of biological role, this protein is located at the 30S-50S ribosomal subunit interface and may play a role in the structure and function of the aminoacyl-tRNA binding site. The sequence is that of Large ribosomal subunit protein bL19 from Saccharophagus degradans (strain 2-40 / ATCC 43961 / DSM 17024).